The chain runs to 273 residues: Undecaprenyl-diphosphatase (273 aa).

Helical transmembrane passes span 13 to 35 (GLVEGFTEFLPISSTGHLIVFGN), 45 to 62 (VFEIAIQLGAVLAVVFEY), 82 to 102 (FVLNLAIAFIPAAVMGLLFDK), 108 to 128 (LFNPLSVAVMLVLGGFFILWV), 186 to 206 (TEFSFFLAVPMMVAATAYDVL), 219 to 239 (LILIGFIAAFVSGLVAVKALL), and 250 to 270 (FAYYRIVFGIVIIILWLSGWI).

Belongs to the UppP family.

Its subcellular location is the cell inner membrane. The enzyme catalyses di-trans,octa-cis-undecaprenyl diphosphate + H2O = di-trans,octa-cis-undecaprenyl phosphate + phosphate + H(+). Functionally, catalyzes the dephosphorylation of undecaprenyl diphosphate (UPP). Confers resistance to bacitracin. The polypeptide is Undecaprenyl-diphosphatase (Neisseria gonorrhoeae (strain NCCP11945)).